Here is a 385-residue protein sequence, read N- to C-terminus: Beta sliding clamp (385 aa).

The protein belongs to the beta sliding clamp family. As to quaternary structure, forms a ring-shaped head-to-tail homodimer around DNA which binds and tethers DNA polymerases and other proteins to the DNA. The DNA replisome complex has a single clamp-loading complex (3 tau and 1 each of delta, delta', psi and chi subunits) which binds 3 Pol III cores (1 core on the leading strand and 2 on the lagging strand) each with a beta sliding clamp dimer. Additional proteins in the replisome are other copies of gamma, psi and chi, Ssb, DNA helicase and RNA primase.

It is found in the cytoplasm. Its function is as follows. Confers DNA tethering and processivity to DNA polymerases and other proteins. Acts as a clamp, forming a ring around DNA (a reaction catalyzed by the clamp-loading complex) which diffuses in an ATP-independent manner freely and bidirectionally along dsDNA. Initially characterized for its ability to contact the catalytic subunit of DNA polymerase III (Pol III), a complex, multichain enzyme responsible for most of the replicative synthesis in bacteria; Pol III exhibits 3'-5' exonuclease proofreading activity. The beta chain is required for initiation of replication as well as for processivity of DNA replication. The chain is Beta sliding clamp (dnaN) from Borreliella burgdorferi (strain ATCC 35210 / DSM 4680 / CIP 102532 / B31) (Borrelia burgdorferi).